The sequence spans 562 residues: Undecaprenyl phosphate-alpha-4-amino-4-deoxy-L-arabinose arabinosyl transferase (562 aa).

The next 12 helical transmembrane spans lie at 14–34, 91–111, 120–140, 142–162, 186–206, 215–235, 267–287, 302–322, 324–344, 354–374, 395–415, and 425–445; these read IKFS…PLNY, FSVR…IYLF, ILSL…IIGT, SVLD…FWLA, FITK…IWLF, TIIH…PWIY, PFWY…GFLF, IEFY…ISKG, LPTY…KNIE, LLKI…IFII, LILC…IIFN, and LSII…IIYA.

This sequence belongs to the glycosyltransferase 83 family.

Its subcellular location is the cell inner membrane. It carries out the reaction 4-amino-4-deoxy-alpha-L-arabinopyranosyl di-trans,octa-cis-undecaprenyl phosphate + lipid IVA = lipid IIA + di-trans,octa-cis-undecaprenyl phosphate.. It functions in the pathway lipopolysaccharide metabolism; 4-amino-4-deoxy-beta-L-arabinose-lipid A biosynthesis. Functionally, catalyzes the transfer of the L-Ara4N moiety of the glycolipid undecaprenyl phosphate-alpha-L-Ara4N to lipid A. The modified arabinose is attached to lipid A and is required for resistance to polymyxin and cationic antimicrobial peptides. The polypeptide is Undecaprenyl phosphate-alpha-4-amino-4-deoxy-L-arabinose arabinosyl transferase (Wigglesworthia glossinidia brevipalpis).